Reading from the N-terminus, the 263-residue chain is Polyamine aminopropyltransferase (263 aa).

The 221-residue stretch at 1–221 (MARHPYRRLR…AVMAFQSSPK (221 aa)) folds into the PABS domain. S-methyl-5'-thioadenosine-binding positions include D98 and 126–127 (DG). The active-site Proton acceptor is the D144.

This sequence belongs to the spermidine/spermine synthase family. Homodimer or homotetramer.

Its subcellular location is the cytoplasm. It carries out the reaction S-adenosyl 3-(methylsulfanyl)propylamine + putrescine = S-methyl-5'-thioadenosine + spermidine + H(+). Its pathway is amine and polyamine biosynthesis; spermidine biosynthesis; spermidine from putrescine: step 1/1. Its function is as follows. Catalyzes the irreversible transfer of a propylamine group from the amino donor S-adenosylmethioninamine (decarboxy-AdoMet) to putrescine (1,4-diaminobutane) to yield spermidine. The protein is Polyamine aminopropyltransferase of Neisseria meningitidis serogroup A / serotype 4A (strain DSM 15465 / Z2491).